An 88-amino-acid chain; its full sequence is Meiosis expressed gene 1 protein homolog (88 aa).

This sequence belongs to the MEIG1 family. As to quaternary structure, interacts with PACRG. Interacts with MORN3.

Functionally, essential for spermiogenesis. This is Meiosis expressed gene 1 protein homolog from Homo sapiens (Human).